The primary structure comprises 196 residues: Glycerol-3-phosphate acyltransferase (196 aa).

Transmembrane regions (helical) follow at residues 1–21 (MIIF…SISG), 55–75 (IAIF…WLGT), 81–101 (PIYL…PIYF), 118–138 (AISI…VYLF), and 140–160 (YASL…WYIQ).

It belongs to the PlsY family. In terms of assembly, probably interacts with PlsX.

Its subcellular location is the cell inner membrane. It carries out the reaction an acyl phosphate + sn-glycerol 3-phosphate = a 1-acyl-sn-glycero-3-phosphate + phosphate. The protein operates within lipid metabolism; phospholipid metabolism. Functionally, catalyzes the transfer of an acyl group from acyl-phosphate (acyl-PO(4)) to glycerol-3-phosphate (G3P) to form lysophosphatidic acid (LPA). This enzyme utilizes acyl-phosphate as fatty acyl donor, but not acyl-CoA or acyl-ACP. This is Glycerol-3-phosphate acyltransferase from Blochmanniella floridana.